Consider the following 120-residue polypeptide: Large ribosomal subunit protein bL20 (120 aa).

It belongs to the bacterial ribosomal protein bL20 family.

Functionally, binds directly to 23S ribosomal RNA and is necessary for the in vitro assembly process of the 50S ribosomal subunit. It is not involved in the protein synthesizing functions of that subunit. In Pseudoalteromonas translucida (strain TAC 125), this protein is Large ribosomal subunit protein bL20.